A 332-amino-acid polypeptide reads, in one-letter code: L-lactate dehydrogenase A chain (332 aa).

A2 carries the N-acetylalanine modification. N6-acetyllysine; alternate is present on K5. K5 is subject to N6-succinyllysine; alternate. K14 is modified (N6-acetyllysine). 29–57 (GAVGMACAISILMKDLADEVALVDVMEDK) lines the NAD(+) pocket. Position 57 is an N6-acetyllysine; alternate (K57). K57 is covalently cross-linked (Glycyl lysine isopeptide (Lys-Gly) (interchain with G-Cter in SUMO2); alternate). K81 carries the post-translational modification N6-acetyllysine. Residue R106 participates in substrate binding. The residue at position 118 (K118) is an N6-acetyllysine; alternate. K118 carries the N6-succinyllysine; alternate modification. K126 carries the N6-acetyllysine modification. Residue N138 coordinates NAD(+). 2 residues coordinate substrate: N138 and R169. H193 functions as the Proton acceptor in the catalytic mechanism. N6-acetyllysine is present on residues K224 and K232. Position 239 is a phosphotyrosine (Y239). An N6-acetyllysine modification is found at K243. Substrate is bound at residue T248. Phosphothreonine is present on T309. At K318 the chain carries N6-acetyllysine; alternate. N6-succinyllysine; alternate is present on K318. A Phosphothreonine modification is found at T322.

The protein belongs to the LDH/MDH superfamily. LDH family. Homotetramer. Interacts with PTEN upstream reading frame protein MP31. In terms of processing, ISGylated.

Its subcellular location is the cytoplasm. It catalyses the reaction (S)-lactate + NAD(+) = pyruvate + NADH + H(+). It participates in fermentation; pyruvate fermentation to lactate; (S)-lactate from pyruvate: step 1/1. In terms of biological role, interconverts simultaneously and stereospecifically pyruvate and lactate with concomitant interconversion of NADH and NAD(+). The protein is L-lactate dehydrogenase A chain (LDHA) of Bos taurus (Bovine).